Here is a 438-residue protein sequence, read N- to C-terminus: Putative pectate lyase 14 (438 aa).

A signal peptide spans 1–26 (MVVARTLFSISATLIIFLALFLHVNA). 3 N-linked (GlcNAc...) asparagine glycosylation sites follow: Asn-40, Asn-46, and Asn-73. Residues Asp-236, Asp-260, and Asp-264 each contribute to the Ca(2+) site. Arg-316 is an active-site residue.

This sequence belongs to the polysaccharide lyase 1 family. Requires Ca(2+) as cofactor.

It catalyses the reaction Eliminative cleavage of (1-&gt;4)-alpha-D-galacturonan to give oligosaccharides with 4-deoxy-alpha-D-galact-4-enuronosyl groups at their non-reducing ends.. It participates in glycan metabolism; pectin degradation; 2-dehydro-3-deoxy-D-gluconate from pectin: step 2/5. The protein is Putative pectate lyase 14 of Arabidopsis thaliana (Mouse-ear cress).